A 382-amino-acid polypeptide reads, in one-letter code: Queuine tRNA-ribosyltransferase (382 aa).

Catalysis depends on D96, which acts as the Proton acceptor. Substrate contacts are provided by residues 96–100 (DSGGF), D151, Q194, and G221. Residues 252–258 (GVGAPDS) form an RNA binding region. D271 functions as the Nucleophile in the catalytic mechanism. An RNA binding; important for wobble base 34 recognition region spans residues 276–280 (TRIAR). 4 residues coordinate Zn(2+): C309, C311, C314, and H340.

This sequence belongs to the queuine tRNA-ribosyltransferase family. As to quaternary structure, homodimer. Within each dimer, one monomer is responsible for RNA recognition and catalysis, while the other monomer binds to the replacement base PreQ1. Zn(2+) serves as cofactor.

It carries out the reaction 7-aminomethyl-7-carbaguanine + guanosine(34) in tRNA = 7-aminomethyl-7-carbaguanosine(34) in tRNA + guanine. The protein operates within tRNA modification; tRNA-queuosine biosynthesis. Catalyzes the base-exchange of a guanine (G) residue with the queuine precursor 7-aminomethyl-7-deazaguanine (PreQ1) at position 34 (anticodon wobble position) in tRNAs with GU(N) anticodons (tRNA-Asp, -Asn, -His and -Tyr). Catalysis occurs through a double-displacement mechanism. The nucleophile active site attacks the C1' of nucleotide 34 to detach the guanine base from the RNA, forming a covalent enzyme-RNA intermediate. The proton acceptor active site deprotonates the incoming PreQ1, allowing a nucleophilic attack on the C1' of the ribose to form the product. After dissociation, two additional enzymatic reactions on the tRNA convert PreQ1 to queuine (Q), resulting in the hypermodified nucleoside queuosine (7-(((4,5-cis-dihydroxy-2-cyclopenten-1-yl)amino)methyl)-7-deazaguanosine). The polypeptide is Queuine tRNA-ribosyltransferase (Lactococcus lactis subsp. cremoris (strain SK11)).